Here is a 502-residue protein sequence, read N- to C-terminus: Cyanidin 3-O-glucoside 5-O-glucosyltransferase (acyl-glucose) (502 aa).

An N-terminal signal peptide occupies residues 1-30 (MNMSCKFEIVLLVSWWLLLVLVFGVESSMF). Asparagine 2 carries an N-linked (GlcNAc...) asparagine glycan. A beta-D-glucoside is bound by residues glutamine 52, histidine 150, and 196 to 197 (NE). Residue glutamate 197 is the Proton donor of the active site. The N-linked (GlcNAc...) asparagine glycan is linked to asparagine 303. A beta-D-glucoside is bound by residues tyrosine 320 and glutamate 388. Catalysis depends on glutamate 388, which acts as the Nucleophile. N-linked (GlcNAc...) asparagine glycosylation occurs at asparagine 425. A beta-D-glucoside contacts are provided by tryptophan 435 and phenylalanine 451.

The protein belongs to the glycosyl hydrolase 1 family. In terms of tissue distribution, expressed in petals.

Its subcellular location is the vacuole. It carries out the reaction cyanidin 3-O-beta-D-glucoside + 1-O-(trans-sinapoyl)-beta-D-glucose = cyanidin 3,5-di-O-beta-D-glucoside + (E)-sinapate. It participates in pigment biosynthesis; anthocyanin biosynthesis. Functionally, beta-glycosidase that catalyzes the transfer of glucose moiety to anthocyanidin 3-glucoside at the 5 position. Anthocyanins are ubiquitous colored pigments that are responsible for variations in petal color. Uses acyl-glucoses, but not UDP-glucose, as the glucose donor. The sequence is that of Cyanidin 3-O-glucoside 5-O-glucosyltransferase (acyl-glucose) (AA5GT) from Dianthus caryophyllus (Carnation).